A 473-amino-acid chain; its full sequence is MNLKTLIGLEIHVELSTKTKMFCGCKNEFGQIPNTNVCPICLGHPGALPHMNKQALRYAIMAGLAFDCDIANEFKMDRKKYFYPDLVKGYQITQEDQPLCTNGYIELKTSTKNKKVRIRRIHIEEDTGKSIHNESGNTLMDYNRAGVPLIEIVSEPDMSNPDEAREFLETLRERIKYLEISDVKMSEGSLRCDVNINVYDEDSDFKTKISEIKNLNSFKSVSKALIYEQERHMQLAKENKIGEKETRRWDEDTQTTIVMRHKEEGNDYRFSVEGDIPKTYVEQSYIEEIKKNLPELPEMRKERFMNEYKIDEYDADILTRNGYLADYYEKVVEISNDPVQSSNWLLGDVLRQVNENEIEIEEMNMSAENLAKLIKLSSAKKINNQTAKKVLREMFNENFDPEVYVKEKGLLQVDDDNLLQQIVDEVVAENPESIESIRNGKDRAIGFLVGQCMKKSKGKGNPQKFNELIKEKI.

Belongs to the GatB/GatE family. GatB subfamily. Heterotrimer of A, B and C subunits.

It catalyses the reaction L-glutamyl-tRNA(Gln) + L-glutamine + ATP + H2O = L-glutaminyl-tRNA(Gln) + L-glutamate + ADP + phosphate + H(+). The enzyme catalyses L-aspartyl-tRNA(Asn) + L-glutamine + ATP + H2O = L-asparaginyl-tRNA(Asn) + L-glutamate + ADP + phosphate + 2 H(+). Allows the formation of correctly charged Asn-tRNA(Asn) or Gln-tRNA(Gln) through the transamidation of misacylated Asp-tRNA(Asn) or Glu-tRNA(Gln) in organisms which lack either or both of asparaginyl-tRNA or glutaminyl-tRNA synthetases. The reaction takes place in the presence of glutamine and ATP through an activated phospho-Asp-tRNA(Asn) or phospho-Glu-tRNA(Gln). The chain is Aspartyl/glutamyl-tRNA(Asn/Gln) amidotransferase subunit B from Finegoldia magna (strain ATCC 29328 / DSM 20472 / WAL 2508) (Peptostreptococcus magnus).